Here is a 366-residue protein sequence, read N- to C-terminus: tRNA/tmRNA (uracil-C(5))-methyltransferase (366 aa).

Positions 190, 218, 223, 239, and 299 each coordinate S-adenosyl-L-methionine. The Nucleophile role is filled by cysteine 324. The active-site Proton acceptor is glutamate 358.

The protein belongs to the class I-like SAM-binding methyltransferase superfamily. RNA M5U methyltransferase family. TrmA subfamily.

It carries out the reaction uridine(54) in tRNA + S-adenosyl-L-methionine = 5-methyluridine(54) in tRNA + S-adenosyl-L-homocysteine + H(+). The catalysed reaction is uridine(341) in tmRNA + S-adenosyl-L-methionine = 5-methyluridine(341) in tmRNA + S-adenosyl-L-homocysteine + H(+). Dual-specificity methyltransferase that catalyzes the formation of 5-methyluridine at position 54 (m5U54) in all tRNAs, and that of position 341 (m5U341) in tmRNA (transfer-mRNA). This chain is tRNA/tmRNA (uracil-C(5))-methyltransferase, found in Shigella boydii serotype 18 (strain CDC 3083-94 / BS512).